The primary structure comprises 483 residues: Glutamate--tRNA ligase (483 aa).

The short motif at 11–21 is the 'HIGH' region element; it reads PSPTGHLHIGN. Zn(2+) contacts are provided by C108, C110, C135, and H137. The 'KMSKS' region signature appears at 252 to 256; the sequence is KLSKR. K255 serves as a coordination point for ATP.

Belongs to the class-I aminoacyl-tRNA synthetase family. Glutamate--tRNA ligase type 1 subfamily. As to quaternary structure, monomer. Zn(2+) serves as cofactor.

It is found in the cytoplasm. The enzyme catalyses tRNA(Glu) + L-glutamate + ATP = L-glutamyl-tRNA(Glu) + AMP + diphosphate. Catalyzes the attachment of glutamate to tRNA(Glu) in a two-step reaction: glutamate is first activated by ATP to form Glu-AMP and then transferred to the acceptor end of tRNA(Glu). The chain is Glutamate--tRNA ligase from Bacillus pumilus (strain SAFR-032).